The sequence spans 241 residues: Methylthioribulose-1-phosphate dehydratase (241 aa).

Positions 1 to 17 (MAKQVENNNNDHLVQST) are enriched in polar residues. The segment at 1–21 (MAKQVENNNNDHLVQSTDPEH) is disordered. Position 100 (Cys100) interacts with substrate. Residues His117 and His119 each coordinate Zn(2+). The active-site Proton donor/acceptor is Glu146. His202 is a binding site for Zn(2+).

It belongs to the aldolase class II family. MtnB subfamily. Requires Zn(2+) as cofactor.

The protein resides in the cytoplasm. It carries out the reaction 5-(methylsulfanyl)-D-ribulose 1-phosphate = 5-methylsulfanyl-2,3-dioxopentyl phosphate + H2O. The protein operates within amino-acid biosynthesis; L-methionine biosynthesis via salvage pathway; L-methionine from S-methyl-5-thio-alpha-D-ribose 1-phosphate: step 2/6. Catalyzes the dehydration of methylthioribulose-1-phosphate (MTRu-1-P) into 2,3-diketo-5-methylthiopentyl-1-phosphate (DK-MTP-1-P). In Aspergillus flavus (strain ATCC 200026 / FGSC A1120 / IAM 13836 / NRRL 3357 / JCM 12722 / SRRC 167), this protein is Methylthioribulose-1-phosphate dehydratase.